A 467-amino-acid polypeptide reads, in one-letter code: Coiled-coil domain-containing protein 174 (467 aa).

2 disordered regions span residues 40-77 (VFGK…EEQK) and 124-162 (EMEA…SEEW). Residues 63–99 (NRAEKDAEQKIEEQKTLDKAREKLEEKAKLYEKMTKG) adopt a coiled-coil conformation. Composition is skewed to basic and acidic residues over residues 64–77 (RAEK…EEQK) and 124–139 (EMEA…KAGE). At Ser-197 the chain carries Phosphoserine. The stretch at 267-309 (LEMLREQTTDQRTKRENIKEKRKAILEARLAKLRQKKMKKSKE) forms a coiled coil. Disordered regions lie at residues 299–363 (LRQK…HIRE) and 378–453 (RQSD…TVTF). The span at 324 to 336 (PLPPEPEAVPTPR) shows a compositional bias: pro residues. Basic and acidic residues-rich tracts occupy residues 348–363 (VQER…HIRE) and 378–389 (RQSDLRAERDPE). Residues 425-437 (PDQSHGPSPEHTS) are compositionally biased toward polar residues. Residues 439-448 (TPAPDNPPQA) show a composition bias toward pro residues.

In terms of tissue distribution, widely expressed.

The protein localises to the nucleus. Functionally, probably involved in neuronal development. The sequence is that of Coiled-coil domain-containing protein 174 (CCDC174) from Homo sapiens (Human).